Here is a 133-residue protein sequence, read N- to C-terminus: FPRL1 inhibitory protein (133 aa).

Positions 1 to 28 are cleaved as a signal peptide; it reads MKKNITKTIIASTVIAAGLLTQTNDAKA.

The protein belongs to the CHIPS/FLIPr family.

The protein localises to the secreted. May be involved in countering the first line of host defense mechanisms. Impairs the leukocyte response to FPRL1 agonists by binding directly to host FPRL1. Exerts, in vitro, anti-inflammatory activity by inhibiting calcium mobilization and cell migration toward chemoattractants. The protein is FPRL1 inhibitory protein (flr) of Staphylococcus aureus (strain Newman).